A 509-amino-acid chain; its full sequence is Maturase K (509 aa).

The protein belongs to the intron maturase 2 family. MatK subfamily.

Its subcellular location is the plastid. The protein localises to the chloroplast. In terms of biological role, usually encoded in the trnK tRNA gene intron. Probably assists in splicing its own and other chloroplast group II introns. The protein is Maturase K of Solanum lycopersicum (Tomato).